Consider the following 189-residue polypeptide: Peptidyl-tRNA hydrolase (189 aa).

Position 17 (Y17) interacts with tRNA. The Proton acceptor role is filled by H22. TRNA-binding residues include F65, N67, and N113.

Belongs to the PTH family. Monomer.

The protein localises to the cytoplasm. It carries out the reaction an N-acyl-L-alpha-aminoacyl-tRNA + H2O = an N-acyl-L-amino acid + a tRNA + H(+). Functionally, hydrolyzes ribosome-free peptidyl-tRNAs (with 1 or more amino acids incorporated), which drop off the ribosome during protein synthesis, or as a result of ribosome stalling. In terms of biological role, catalyzes the release of premature peptidyl moieties from peptidyl-tRNA molecules trapped in stalled 50S ribosomal subunits, and thus maintains levels of free tRNAs and 50S ribosomes. The protein is Peptidyl-tRNA hydrolase of Mycoplasma genitalium (strain ATCC 33530 / DSM 19775 / NCTC 10195 / G37) (Mycoplasmoides genitalium).